Here is a 430-residue protein sequence, read N- to C-terminus: Zinc finger and SCAN domain-containing protein 4 (430 aa).

The segment at Met-1–Glu-38 is disordered. The region spanning Arg-44–Ser-126 is the SCAN box domain. Residues Gly-164–Thr-185 show a composition bias toward polar residues. Disordered stretches follow at residues Gly-164–Gly-196, Tyr-224–Gly-257, and Glu-281–Glu-300. 4 C2H2-type zinc fingers span residues Tyr-309–His-331, Phe-337–His-359, Phe-365–His-387, and Tyr-393–His-415.

It is found in the nucleus. Its subcellular location is the chromosome. It localises to the telomere. Functionally, embryonic stem (ES) cell-specific transcription factor required to regulate ES cell pluripotency. Binds telomeres and plays a key role in genomic stability in ES cells by regulating telomere elongation. Acts as an activator of spontaneous telomere sister chromatid exchange (T-SCE) and telomere elongation in undifferentiated ES cells. This Ailuropoda melanoleuca (Giant panda) protein is Zinc finger and SCAN domain-containing protein 4 (ZSCAN4).